The following is a 267-amino-acid chain: 2-keto-3-deoxy-L-rhamnonate aldolase (267 aa).

His-49 (proton acceptor) is an active-site residue. Position 151 (Gln-151) interacts with substrate. Position 153 (Glu-153) interacts with Mg(2+). The substrate site is built by Ala-178 and Asp-179. Asp-179 contacts Mg(2+).

The protein belongs to the HpcH/HpaI aldolase family. KDR aldolase subfamily. In terms of assembly, homohexamer. Mg(2+) serves as cofactor.

It carries out the reaction 2-dehydro-3-deoxy-L-rhamnonate = (S)-lactaldehyde + pyruvate. Functionally, catalyzes the reversible retro-aldol cleavage of 2-keto-3-deoxy-L-rhamnonate (KDR) to pyruvate and lactaldehyde. In Escherichia coli O157:H7, this protein is 2-keto-3-deoxy-L-rhamnonate aldolase.